The following is a 284-amino-acid chain: 4-diphosphocytidyl-2-C-methyl-D-erythritol kinase (284 aa).

Lysine 9 is an active-site residue. 90–100 (PLVSGLGGDSS) is a binding site for ATP. Residue aspartate 132 is part of the active site.

The protein belongs to the GHMP kinase family. IspE subfamily.

The catalysed reaction is 4-CDP-2-C-methyl-D-erythritol + ATP = 4-CDP-2-C-methyl-D-erythritol 2-phosphate + ADP + H(+). It participates in isoprenoid biosynthesis; isopentenyl diphosphate biosynthesis via DXP pathway; isopentenyl diphosphate from 1-deoxy-D-xylulose 5-phosphate: step 3/6. Its function is as follows. Catalyzes the phosphorylation of the position 2 hydroxy group of 4-diphosphocytidyl-2C-methyl-D-erythritol. The protein is 4-diphosphocytidyl-2-C-methyl-D-erythritol kinase of Dehalococcoides mccartyi (strain ATCC BAA-2266 / KCTC 15142 / 195) (Dehalococcoides ethenogenes (strain 195)).